The sequence spans 331 residues: PHD finger protein 11 (331 aa).

A C2HC pre-PHD-type zinc finger spans residues 42-78 (KRTCALCPKDVEYNVLYFAQSENIAAHENCLLYSSGL). The PHD-type zinc finger occupies 108–160 (LKCKFCHKRGATVGCDLKNCNKNYHFFCAKKDDAVPQSDGVRGIYKLLCQQHA).

Interacts with BRCA1 and RELA. As to expression, highly expressed in T and B-cells, as well as natural killer and mature dendritic cells. Expressed at higher levels in Th1 as compared to Th2 cells. Expressed at low levels in all normal tissues tested, including lung, testis, small intestine, breast, liver and placenta.

The protein localises to the nucleus. Its function is as follows. Positive regulator of Th1-type cytokine gene expression. The sequence is that of PHD finger protein 11 (PHF11) from Homo sapiens (Human).